The following is a 968-amino-acid chain: MPFTLGQRWISDTESELGLGTVVAIDVRMVTLLFPATGENRLYARNDSPITRVMFNPGDTITHHEGWQLKVEEVSEENGLITYIGTRLDTEETGVSMREVLLDSKLTFSKPQDRLFAGQIDRMDRFALRFRARKYQSEQFRLPWSGLRGIRASLIPHQLHIAYEVGQRHAPRVLLADEVGLGKTIEAGMIIHQQLLSGRAERILIVVPESLQHQWLVEMLRRFNLRFSLFDDSRYSEALLDSTNPFETEQMVICSLDFVRRNKQRLEQLADASWDLLVVDEAHHLAWSEEAPSREYQVIEQLAEHIPGVLLLTATPEQLGQQSHFARLRLLDPDRFHDYEEFINEQQKYRPIADAVTLLLGGERLTDDKLNLLGELINEQDIEPLLKAANSQTEDSEAARQELVTMLMDRHGTSRILFRNTRNGVKGFPHRVLHQIKLPLPTQYQTAIKVSGIMGAKKSLEARAKDMLYPEQIYQEFEGENATWWNFDPRVEWLLNYLIANRNEKVLVICAQAATALQLEQVLREREAIRAAVFHEGLSLIERDRAAAYFASEEDGAQVLLCSEIGSEGRNFQFACQLVMFDLPFNPDLLEQRIGRLDRIGQNREIQIMVPYLENTAQAVLVRWYHEGLDAFEHTCPTGRTIYDSGYQELITYLATPSEQEGLDEFIHTCRQQHEGLKLQLEQGRDRLLEMHSNGGEHGQELAEIIADQDNDVNLVSFALNLFDIVGINQEDRSDNLIVLTPSDHMLVPDFPGLPQDGCTVTFDREQALSREDAQFVSWEHPIIRNGLDLILSGDTGSCAVSLLKNKALPVGTLLAELVYVVEAQAPKHLQLTRFLPPTPVRMLMDKNGTNLAAQVEFESFNRQLNAVNRHTSSKLVNAVQQEVHAMLQQAEALVEEQARLLIEAAKHEADDKLSAELARLEALKAVNPNIRDDEIETLEHNRKMVLENLNQAGWRLDAIRLVVVTHQ.

Residues 164–334 (EVGQRHAPRV…FARLRLLDPD (171 aa)) form the Helicase ATP-binding domain. Residue 177–184 (DEVGLGKT) coordinates ATP. The DEAH box motif lies at 280 to 283 (DEAH). The 175-residue stretch at 490 to 664 (RVEWLLNYLI…ATPSEQEGLD (175 aa)) folds into the Helicase C-terminal domain.

This sequence belongs to the SNF2/RAD54 helicase family. RapA subfamily. Interacts with the RNAP. Has a higher affinity for the core RNAP than for the holoenzyme. Its ATPase activity is stimulated by binding to RNAP.

Transcription regulator that activates transcription by stimulating RNA polymerase (RNAP) recycling in case of stress conditions such as supercoiled DNA or high salt concentrations. Probably acts by releasing the RNAP, when it is trapped or immobilized on tightly supercoiled DNA. Does not activate transcription on linear DNA. Probably not involved in DNA repair. This chain is RNA polymerase-associated protein RapA, found in Yersinia enterocolitica serotype O:8 / biotype 1B (strain NCTC 13174 / 8081).